The primary structure comprises 1191 residues: MEPAFPASSAGVQSQSGPEPGAGQQEPPPPATPLRPVASQSRFQVDLVTEGGGGGDGQKGQTAAQPAAAAKDKDRGDGGAAAPSPASPAAAAEPPAAAAEEAKGRFRVNFVDPASDEPPLSSQQQPPPPSSASSAHGGHQPPSESMNGYPQNGDTMMSEGSLHSSGTGAHHYYDTHTNTYYLRTFGHNTIDAVPRIDHYRHTVAQLGEKLIRPSLAELHDELDKEPFEDGYVNGEESSPAEEAVSKHVADNKGVVKFGWIKGVLVRCMLNIWGVMLFIRLSWIVGHAGIGLALLVIGTATVVTTITGLSTSAITTNGFVRGGGAYYLISRSLGPEFGGAIGLIFAFANAVAVAMYVVGFAETVRDLLVEHNALMIDEMSDIRIIGSVTIVVLFGISVAGMEWEAKAQIVLLGILLLAIVNFTVGTFIPANDKRAKGFFNYRGEIFSENFVPDFRDGEDFFSVFAIFFPAATGILAGANISGDLADPQLAIPKGTLLAILITTIVYAGAAVSVGSCIVREATGNLTDAIIPGTVTNCTNVACKLGFNFSSCATNKCSYGLMNDFQVMSLVSGFGPLITAGIFSATLSSALASLVSAPKIFQALCKDNIYPGLHVFSVGYGKNNEPLRGYVLTFFIGLGFILIAELNVIAPIISNFFLASYALINFSVFHASLAKSPGWRPAFRFYNMWISLIGAILCCGVMFVINWWAALLTNVIVLALYIYVTYKKPDVNWGSSTQALTYLNALQHAIRLTGVEDHVKNFRPQCLLMTGAPTSRPALLHLVHAFTKNVGLVVCGHVHTGPRRQALKEISTDQAKYQRWLIKNKMKAFYAPVYAEDLREGTQFLLQAVGLGRMRPNTLVFGFKKDWRQALMKDVENYINAIHDAFDYQYGVVVIRLKEGFNISHLQAQEELCTSQEKSAHPKDIVVNLEHSDADSSKPSSKSVSETNSPAVCQDQKDEEDDGKASTQPLLKKEVKDPSVPLNMTDQKLLQASSQFQKKQGKGTIDVWWLFDDGGLTLLIPYLLTTKKKWKDCKIRVFIGGKINRIDHDRRTMATLLSKFRIDFSDITVLGDMNTKPSKDNITAFEEMIEPFRLHEDDKEQEASEKMKEEEPWRITDNELEIYRMKTYRQIRLNELLRENSGTANLIVMSLPVARKGAVSSALYMAWIETLSKDLPPILLVRGNHQSVLTFYS.

A disordered region spans residues 1 to 166 (MEPAFPASSA…MSEGSLHSSG (166 aa)). At 1 to 258 (MEPAFPASSA…ADNKGVVKFG (258 aa)) the chain is on the cytoplasmic side. 4 stretches are compositionally biased toward low complexity: residues 13 to 25 (QSQSGPEPGAGQQ), 59 to 69 (KGQTAAQPAAA), 80 to 99 (AAAPSPASPAAAAEPPAAAA), and 131 to 141 (SASSAHGGHQP). The segment covering 142–155 (PSESMNGYPQNGDT) has biased composition (polar residues). Phosphothreonine; by OXSR1 and STK39 occurs at positions 175, 179, and 184. Residues threonine 189 and threonine 202 each carry the phosphothreonine modification. Residues 259–288 (WIKGVLVRCMLNIWGVMLFIRLSWIVGHAG) form a discontinuously helical membrane-spanning segment. Leucine 269 serves as a coordination point for Na(+). Positions 270 and 271 each coordinate K(+). Na(+) is bound at residue tryptophan 272. Positions 273, 274, and 275 each coordinate chloride. The chain crosses the membrane as a helical span at residues 289-308 (IGLALLVIGTATVVTTITGL). Residues 309 to 339 (STSAITTNGFVRGGGAYYLISRSLGPEFGGA) lie on the Cytoplasmic side of the membrane. Residues 340–367 (IGLIFAFANAVAVAMYVVGFAETVRDLL) form a helical membrane-spanning segment. Phenylalanine 344 lines the chloride pocket. Tyrosine 355 serves as a coordination point for K(+). Residues 368–377 (VEHNALMIDE) are Extracellular-facing. The chain crosses the membrane as a helical span at residues 378 to 401 (MSDIRIIGSVTIVVLFGISVAGME). Topologically, residues 402–404 (WEA) are cytoplasmic. Residues 405–426 (KAQIVLLGILLLAIVNFTVGTF) form a helical membrane-spanning segment. At 427-458 (IPANDKRAKGFFNYRGEIFSENFVPDFRDGED) the chain is on the extracellular side. Residues 459 to 476 (FFSVFAIFFPAATGILAG) form a discontinuously helical membrane-spanning segment. K(+)-binding residues include proline 468, alanine 469, and threonine 471. The chloride site is built by proline 468 and alanine 469. Chloride is bound by residues glycine 472 and isoleucine 473. The Cytoplasmic portion of the chain corresponds to 477–491 (ANISGDLADPQLAIP). A helical membrane pass occupies residues 492–513 (KGTLLAILITTIVYAGAAVSVG). The Extracellular segment spans residues 514–571 (SCIVREATGNLTDAIIPGTVTNCTNVACKLGFNFSSCATNKCSYGLMNDFQVMSLVSG). N-linked (GlcNAc...) asparagine glycosylation is found at asparagine 523 and asparagine 535. Cysteine 536 and cysteine 541 are oxidised to a cystine. N-linked (GlcNAc...) asparagine glycosylation occurs at asparagine 546. Residues cysteine 550 and cysteine 555 are joined by a disulfide bond. Residues 572-596 (FGPLITAGIFSATLSSALASLVSAP) form a helical membrane-spanning segment. Alanine 583, serine 586, and serine 587 together coordinate Na(+). Topologically, residues 597-624 (KIFQALCKDNIYPGLHVFSVGYGKNNEP) are cytoplasmic. The next 2 membrane-spanning stretches (helical) occupy residues 625-645 (LRGYVLTFFIGLGFILIAELN) and 646-664 (VIAPIISNFFLASYALINF). Positions 655 and 659 each coordinate chloride. Residues 665–687 (SVFHASLAKSPGWRPAFRFYNMW) are Cytoplasmic-facing. 2 consecutive transmembrane segments (helical) span residues 688–705 (ISLIGAILCCGVMFVINW) and 706–718 (WAALLTNVIVLAL). Topologically, residues 719 to 1191 (YIYVTYKKPD…NHQSVLTFYS (473 aa)) are cytoplasmic. A scissor helix region spans residues 734-751 (STQALTYLNALQHAIRLT). Residues 929–972 (HSDADSSKPSSKSVSETNSPAVCQDQKDEEDDGKASTQPLLKKE) are disordered. Residues 935–948 (SKPSSKSVSETNSP) show a composition bias toward low complexity. Position 1114 is a phosphothreonine (threonine 1114).

Belongs to the SLC12A transporter family. Homodimer. Phosphorylated at Thr-175, Thr-179 and Thr-184 by OXSR1/OSR1 and STK39/SPAK downstream of WNK kinases (WNK1, WNK2, WNK3 or WNK4), promoting its activity. Strongly expressed in rectal gland, brain, gill and intestine. Also detected at lower levels in heart, kidney, and testis.

The protein localises to the basolateral cell membrane. It carries out the reaction K(+)(out) + 2 chloride(out) + Na(+)(out) = K(+)(in) + 2 chloride(in) + Na(+)(in). With respect to regulation, activated following phosphorylation by OXSR1/OSR1 and STK39/SPAK. Inhibited by bumetanide. In terms of biological role, cation-chloride cotransporter which mediates the electroneutral transport of chloride, potassium and/or sodium ions across the membrane. Plays a vital role in the regulation of ionic balance and cell volume. The sequence is that of Solute carrier family 12 member 2 (SLC12A2) from Squalus acanthias (Spiny dogfish).